The sequence spans 381 residues: Heterogeneous nuclear rnp K-like protein 2 (381 aa).

A disordered region spans residues 1–34; the sequence is MSQFFEAATPVAIPTNNTNGGSSDAGSAATGGAP. Over residues 15–33 the composition is skewed to low complexity; sequence TNNTNGGSSDAGSAATGGA. KH domains lie at 43-107, 156-221, and 258-326; these read TINH…IGDI, IGYV…LIEI, and NTRI…ESML. Residues 344–381 are disordered; that stretch reads LEAAEGDATVVTERSDSASFLEEKEEPQKNHDNKEEQS. A phosphoserine mark is found at serine 358, serine 360, and serine 362. Residues 369 to 381 are compositionally biased toward basic and acidic residues; sequence EPQKNHDNKEEQS.

Belongs to the HEK2 family. As to quaternary structure, binds RNA. In terms of processing, phosphorylated by the plasma membrane-Anchored casein kinase YCK1. Phosphorylation at its C-terminus reduces its RNA-binding capacity.

It is found in the cytoplasm. The protein resides in the P-body. Its subcellular location is the nucleus. The protein localises to the chromosome. It localises to the telomere. Its function is as follows. RNA-binding protein involved in the correct localization of transcripts in the cell. RNA localization is a widespread mechanism for achieving localized protein synthesis. Required for the asymmetric localization to the daughter cell nucleus of the ASH1 transcript, coding for a specific repressor of transcription. Overexpression inhibits translation of the ASH1 transcript. Involved in the stability of transcripts, like the MTL1 mRNA. Involved in structural and functional organization of telomeric chromatin and regulates silencing at the HMR locus. In Saccharomyces cerevisiae (strain JAY291) (Baker's yeast), this protein is Heterogeneous nuclear rnp K-like protein 2 (HEK2).